We begin with the raw amino-acid sequence, 169 residues long: Probable prefoldin subunit 3 (169 aa).

Belongs to the prefoldin subunit alpha family. In terms of assembly, heterohexamer of two PFD-alpha type and four PFD-beta type subunits.

Its function is as follows. Binds specifically to cytosolic chaperonin (c-CPN) and transfers target proteins to it. Binds to nascent polypeptide chain and promotes folding in an environment in which there are many competing pathways for nonnative proteins. This chain is Probable prefoldin subunit 3, found in Schizosaccharomyces pombe (strain 972 / ATCC 24843) (Fission yeast).